A 398-amino-acid chain; its full sequence is Acetate kinase (398 aa).

Asn-9 lines the Mg(2+) pocket. ATP is bound at residue Lys-16. Arg-93 lines the substrate pocket. Asp-150 (proton donor/acceptor) is an active-site residue. ATP is bound by residues 209–213 (HLGAG), 284–286 (DMR), and 329–333 (GIGEH). Glu-382 provides a ligand contact to Mg(2+).

The protein belongs to the acetokinase family. As to quaternary structure, homodimer. Mg(2+) serves as cofactor. The cofactor is Mn(2+).

The protein localises to the cytoplasm. The enzyme catalyses acetate + ATP = acetyl phosphate + ADP. Its pathway is metabolic intermediate biosynthesis; acetyl-CoA biosynthesis; acetyl-CoA from acetate: step 1/2. Its function is as follows. Catalyzes the formation of acetyl phosphate from acetate and ATP. Can also catalyze the reverse reaction. In Rhodopseudomonas palustris (strain TIE-1), this protein is Acetate kinase.